We begin with the raw amino-acid sequence, 449 residues long: Phosphoglucosamine mutase (449 aa).

Residue Ser-101 is the Phosphoserine intermediate of the active site. Residues Ser-101, Asp-243, Asp-245, and Asp-247 each contribute to the Mg(2+) site. Position 101 is a phosphoserine (Ser-101).

It belongs to the phosphohexose mutase family. Requires Mg(2+) as cofactor. Post-translationally, activated by phosphorylation.

It carries out the reaction alpha-D-glucosamine 1-phosphate = D-glucosamine 6-phosphate. Catalyzes the conversion of glucosamine-6-phosphate to glucosamine-1-phosphate. The chain is Phosphoglucosamine mutase from Syntrophobacter fumaroxidans (strain DSM 10017 / MPOB).